The sequence spans 485 residues: Rhamnulokinase (485 aa).

10 to 14 (ASSGR) serves as a coordination point for ATP. Substrate contacts are provided by residues Ala-78 and 233–235 (HDT). The active-site Proton acceptor is Asp-234. ATP is bound at residue Thr-256. Substrate is bound at residue Asn-293. Gln-301 contacts ATP. Cysteines 351 and 368 form a disulfide. Residue Gly-400 coordinates ATP.

It belongs to the rhamnulokinase family. The cofactor is Mg(2+).

The enzyme catalyses L-rhamnulose + ATP = L-rhamnulose 1-phosphate + ADP + H(+). It functions in the pathway carbohydrate degradation; L-rhamnose degradation; glycerone phosphate from L-rhamnose: step 2/3. Its function is as follows. Involved in the catabolism of L-rhamnose (6-deoxy-L-mannose). Catalyzes the transfer of the gamma-phosphate group from ATP to the 1-hydroxyl group of L-rhamnulose to yield L-rhamnulose 1-phosphate. The polypeptide is Rhamnulokinase (Bacillus subtilis (strain 168)).